Consider the following 416-residue polypeptide: Ferrochelatase, mitochondrial (416 aa).

The transit peptide at 1–47 directs the protein to the mitochondrion; sequence MAAALRSAGVLLRDRLLYGGSRACQPRRCQSGAATAAAATETAQRAR. The tract at residues 41-62 is disordered; it reads ETAQRARSPKPQAQPGNRKPRT. Lysine 50 carries the post-translational modification N6-acetyllysine. Protoporphyrin IX-binding residues include arginine 108, tyrosine 116, and serine 123. At lysine 131 the chain carries N6-succinyllysine. Cysteine 189 is a binding site for [2Fe-2S] cluster. The active site involves histidine 223. Lysine 283 carries the N6-acetyllysine; alternate modification. Position 283 is an N6-succinyllysine; alternate (lysine 283). Aspartate 376 is a catalytic residue. [2Fe-2S] cluster is bound by residues cysteine 396, cysteine 399, and cysteine 404. Lysine 408 carries the N6-acetyllysine; alternate modification. Lysine 408 carries the N6-succinyllysine; alternate modification.

This sequence belongs to the ferrochelatase family. In terms of assembly, homodimer. Homotetramer. Interaction with PGRMC1; the interaction results in decreased FECH activity. Interacts with ABCB10 and SLC25A37; this interaction forms an oligomeric complex. Forms a complex with ABCB7 and ABCB10, where a dimeric FECH bridges ABCB7 and ABCB10 homodimers; this complex may be required for cellular iron homeostasis, mitochondrial function and heme biosynthesis. Interacts with ABCB7 and ABCB10. It depends on [2Fe-2S] cluster as a cofactor.

The protein localises to the mitochondrion inner membrane. It carries out the reaction heme b + 2 H(+) = protoporphyrin IX + Fe(2+). Its pathway is porphyrin-containing compound metabolism; protoheme biosynthesis; protoheme from protoporphyrin-IX: step 1/1. Functionally, catalyzes the ferrous insertion into protoporphyrin IX and participates in the terminal step in the heme biosynthetic pathway. This is Ferrochelatase, mitochondrial from Bos taurus (Bovine).